The sequence spans 459 residues: Magnesium transporter MRS2-11, chloroplastic (459 aa).

The N-terminal 62 residues, 1–62, are a transit peptide targeting the chloroplast; the sequence is MALTPIPSTF…EALKVLSRSK (62 aa). The interval 76 to 122 is disordered; sequence GDYESLNVSDDDDGSDSNSSDGDNGGGRDDSKKIDSSSSSSSSDSTS. Positions 101–110 are enriched in basic and acidic residues; sequence GGRDDSKKID. The segment covering 111 to 122 has biased composition (low complexity); sequence SSSSSSSSDSTS. Transmembrane regions (helical) follow at residues 397 to 417 and 430 to 450; these read LLLQVGTFCVAVGALIAGIFG and AFWLTTGGIIIGAAVAFFLMY. Residues 417–419 carry the Required for magnesium transport activity motif; that stretch reads GMN.

This sequence belongs to the CorA metal ion transporter (MIT) (TC 1.A.35.5) family. Expressed in the green part of the plant. Preferentially expressed in the spongy mesophyll cells and stomata of young leaves but also detected in cotyledons and at the base of the leaf petioles.

It is found in the plastid. Its subcellular location is the chloroplast membrane. Its function is as follows. High-affinity magnesium transporter that mediates the influx of magnesium in chloroplast. The sequence is that of Magnesium transporter MRS2-11, chloroplastic (MRS2-11) from Arabidopsis thaliana (Mouse-ear cress).